We begin with the raw amino-acid sequence, 904 residues long: UPF0182 protein CKL_0015 (904 aa).

7 helical membrane passes run 9 to 29 (SLIV…DFII), 47 to 67 (LIAI…SIVL), 96 to 116 (IFII…AATY), 157 to 177 (ILSL…TLSV), 208 to 228 (LAVL…LKCI), 253 to 273 (YKII…SILV), and 279 to 299 (IIVS…SYTV).

Belongs to the UPF0182 family.

It localises to the cell membrane. The sequence is that of UPF0182 protein CKL_0015 from Clostridium kluyveri (strain ATCC 8527 / DSM 555 / NBRC 12016 / NCIMB 10680 / K1).